We begin with the raw amino-acid sequence, 300 residues long: Iron/alpha-ketoglutarate-dependent dioxygenase okaE (300 aa).

3 residues coordinate Fe cation: His134, Asp136, and His210.

This sequence belongs to the PhyH family. Homodimer. It depends on Fe cation as a cofactor.

The catalysed reaction is okaramine A + 2-oxoglutarate + AH2 + O2 = 12-deshydroxyl okaramine E + succinate + A + CO2 + H2O. It carries out the reaction 12-deshydroxyl okaramine E + 2-oxoglutarate + O2 = okaramine E + succinate + CO2. It catalyses the reaction okaramine A + 2-oxoglutarate + O2 = okaramine E + succinate + CO2. It functions in the pathway alkaloid biosynthesis. The protein operates within secondary metabolite biosynthesis; terpenoid biosynthesis. Functionally, iron/alpha-ketoglutarate-dependent dioxygenase; part of the gene cluster that mediates the biosynthesis of okaramine B, a prenylated indole alkaloid that possesses an unusual octacyclic ring system, including a four-membered azetidine ring and an eight-membered azocine ring, and that exhibits insecticidal activity against silkworm larvae. Within the pathway, okaE forms the unusual 2-dimethyl-3-methyl-azetidine ring to yield 12-deshydroxyl okaramine E from okaramine A. OkaE also catalyzes the hydroxylation of 12-deshydroxyl okaramine E to produce okaramine E. The biosynthesis begins with the NRPS okaA that condenses two tryptophan molecules into cyclo(L-Trp-L-Trp). Prenylation by the prenyltransferase okaC then leads to the formation of cyclo(N8-(alpha,alpha-dimethylallyl)-L-Trp-6a-(alpha,alpha-dime-thylallyl)-L-Trp). This is followed by indole 2,3-epoxidation by the FAD-dependent monooxygenase okaB to facilitate the formation of the hexahydropyrrolo[2,3-b]indole (HPI) moiety of okaramine C. The cytochrome P450 monooxygenase okaD then likely catalyzes formation of the eight-membered ring of okaramine A. The dioxygenase okaE further forms the unusual 2-dimethyl-3-methyl-azetidine ring to yield 12-deshydroxyl okaramine E, as well as the hydroxylation of 12-deshydroxyl okaramine E to produce okaramine E. The cytochrome P450 monoxygenase okaG converts 12-deshydroxyl okaramine E into 3-desmethyl okaramine B which is further methylated by the methyltransferase okaF into okaramine B. In a shunt pathway, okaG and okaF together are also able to convert okaramine E into okaramine D. Okaramine H is produced by nonenzymatic conversion from okaramine A. This Penicillium ochrochloron protein is Iron/alpha-ketoglutarate-dependent dioxygenase okaE.